Reading from the N-terminus, the 295-residue chain is Glycine--tRNA ligase alpha subunit (295 aa).

The protein belongs to the class-II aminoacyl-tRNA synthetase family. As to quaternary structure, tetramer of two alpha and two beta subunits.

Its subcellular location is the cytoplasm. It catalyses the reaction tRNA(Gly) + glycine + ATP = glycyl-tRNA(Gly) + AMP + diphosphate. The chain is Glycine--tRNA ligase alpha subunit from Thermosynechococcus vestitus (strain NIES-2133 / IAM M-273 / BP-1).